We begin with the raw amino-acid sequence, 115 residues long: MAGFGLPNFGQLTEAFKKAQQIQQNAQKLQEELEVMEIEGTNDDNRAKIWMSGNQKPLRVEIDPSLLSEGKAIIEEAILDAMKSAHEVSTSTMKERMEDLTGGFKLNLPGMGEEN.

Residues 89-115 are disordered; it reads STSTMKERMEDLTGGFKLNLPGMGEEN.

It belongs to the YbaB/EbfC family. In terms of assembly, homodimer.

It is found in the cytoplasm. The protein localises to the nucleoid. Functionally, binds to DNA and alters its conformation. May be involved in regulation of gene expression, nucleoid organization and DNA protection. This Prochlorococcus marinus (strain NATL2A) protein is Nucleoid-associated protein PMN2A_1347.